Consider the following 81-residue polypeptide: Large ribosomal subunit protein bL27m (81 aa).

Over residues 1 to 11 (MATKKSGGSSR) the composition is skewed to polar residues. A disordered region spans residues 1–20 (MATKKSGGSSRNGRDSKGRR).

It belongs to the bacterial ribosomal protein bL27 family.

The protein resides in the mitochondrion. This is Large ribosomal subunit protein bL27m (RPL27) from Reclinomonas americana.